Consider the following 245-residue polypeptide: MAGHSQFANIKHRKGAQDAKRAKLFTKLRKEIIVAARSGSPVPELNPNLRSAIASAKAFNLPKDRIEAAIRSAQGNEADDSYEEITYEGYGPGSVAIVVHALSNNRNRTAGELRHIFTRHGGKLGERGSISYLFDHVGLIVYGAAQVGSFDVIFDEATSLGAIDLEEHDNGEEKEYHVICQVEDFGRIRDALYEKFSDGVTARLSWRPKQKVKPASDEASAKLISFLNDLDDNDDVQYVEGDFEL.

The protein belongs to the TACO1 family.

It is found in the cytoplasm. This is Probable transcriptional regulatory protein APH_0480 from Anaplasma phagocytophilum (strain HZ).